The following is a 219-amino-acid chain: Elongation factor Ts (219 aa).

Positions 82-85 (TDFV) are involved in Mg(2+) ion dislocation from EF-Tu.

The protein belongs to the EF-Ts family.

It localises to the cytoplasm. Functionally, associates with the EF-Tu.GDP complex and induces the exchange of GDP to GTP. It remains bound to the aminoacyl-tRNA.EF-Tu.GTP complex up to the GTP hydrolysis stage on the ribosome. This chain is Elongation factor Ts, found in Anaeromyxobacter dehalogenans (strain 2CP-C).